A 952-amino-acid chain; its full sequence is MASLLARHTKMPVVTVEDEMELAADTVFLIPPATIMTLEGRHLRLAPKDRRVLSLPIDAFFTSMAAGFGSRAVAVVLSGTGSDGTRGVGAVHAAGGVAIAQDPRDARFDGMPRSAIATGFIDSALGIERIGPWIADYLIRRPRLGQLTGAERPDGATGVAVDDDRVAVGQFDGLEPAEALGRIVEILSLSGEVNFLDYKPGTVQRRIERRMGVRQVPDLTSYLELLTHDRTELASLRREMLIPVTSFFRDPDSFAELAEKVIDPLVAQAAVGSTLRVWTAGCATGEEAYTLAMLFFDAFERAGRWPTLKIFATDVEPMNIETAAAGFFAETIAADLPTTFLERFFTTRGGQYTIRPEIRQTIVFARHNLLSDPPFTRMDLVTCRNTLIYFRPEAQERALRRMHYAVRTGGYLFLGGSEALVQVQDDFSVLSARHRIWQALRPGAAPLTDRRAGLYVTPRPPATRRDNAPVTAVERGFATLSRTYAPPPALLVNSHHEILHSYGEVSRFMQMREGAASLEIGRMLVEPLLPVASALLFKSARLGEEAASDSIPIAEGILGPDPMRLRLRVVPVKQGTDSDEGRLYILAFEPDEGPDDGISGIDIDREVGARIEMLEAELAMTRESLQAMIEELETSNEELQATNEEMMASNEELQSANEELQSVNEELNSLNAEYQEKIDLLNRSNADLDSLTEIMAMSTIFVDSELTVTRFSPDAAELFRIRDVDVGRPLGDLTHRLDYPALLDDLRRTLQGQSRTEREVSGLNGRHYLVRMLPYRVPSSAAQGAVVTFVDITQTRNLQLLQAVIDGLAEHVAVLDGHGDILLVNAAWTRFAADNGDPGLAHTGVGTNYVGRCDIGEAAIDSGYAKRAVEGIRSVLTGKQRHFTMEYPCDAPGQPRWFVMHARPLDGARGGAVVSHIEITRWHNQTEASPETSSGGLPGSDGTGADGGAPRA.

A CheB-type methylesterase domain is found at 1 to 141 (MASLLARHTK…PWIADYLIRR (141 aa)). The CheR-type methyltransferase domain occupies 168 to 440 (VGQFDGLEPA…SARHRIWQAL (273 aa)). Polar residues predominate over residues 923–935 (HNQTEASPETSSG). The disordered stretch occupies residues 923–952 (HNQTEASPETSSGGLPGSDGTGADGGAPRA). The segment covering 936–952 (GLPGSDGTGADGGAPRA) has biased composition (gly residues).

This is an uncharacterized protein from Rhodobacter capsulatus (Rhodopseudomonas capsulata).